The primary structure comprises 315 residues: 6-phosphogluconolactonase-like protein 2 (315 aa).

Phosphoserine is present on residues Ser42 and Ser64. The segment at 59–85 (CKSTASAAEGKSGSSGSGSGSSKPKKE) is disordered. The segment covering 60–70 (KSTASAAEGKS) has biased composition (low complexity).

Belongs to the glucosamine/galactosamine-6-phosphate isomerase family. 6-phosphogluconolactonase subfamily.

The protein resides in the cytoplasm. May be involved in regulation of tRNA subcellular distribution. The sequence is that of 6-phosphogluconolactonase-like protein 2 (SOL2) from Saccharomyces cerevisiae (strain ATCC 204508 / S288c) (Baker's yeast).